Consider the following 468-residue polypeptide: Glutamine synthetase (468 aa).

In terms of domain architecture, GS beta-grasp spans 14-98 (HDVKYVDLRF…ILCDVYEPST (85 aa)). The GS catalytic domain occupies 106–468 (PRGIAKAAEK…PIEYKMYYSV (363 aa)). Mg(2+)-binding residues include glutamate 131 and glutamate 133. ATP is bound at residue glutamate 209. Mg(2+) contacts are provided by glutamate 214 and glutamate 221. Residues 265-266 (NG) and glycine 266 contribute to the L-glutamate site. Residue histidine 270 participates in Mg(2+) binding. ATP-binding positions include 272 to 274 (HQS) and serine 274. L-glutamate is bound by residues arginine 322, glutamate 328, and arginine 340. ATP is bound by residues arginine 340, arginine 345, and lysine 353. Glutamate 358 serves as a coordination point for Mg(2+). Arginine 360 contacts L-glutamate. An O-AMP-tyrosine modification is found at tyrosine 398.

The protein belongs to the glutamine synthetase family. As to quaternary structure, oligomer of 12 subunits arranged in the form of two hexameric ring. The cofactor is Mg(2+).

The protein localises to the cytoplasm. The enzyme catalyses L-glutamate + NH4(+) + ATP = L-glutamine + ADP + phosphate + H(+). Its activity is regulated as follows. The activity of this enzyme could be controlled by adenylation under conditions of abundant glutamine. Functionally, catalyzes the ATP-dependent biosynthesis of glutamine from glutamate and ammonia. The chain is Glutamine synthetase from Azospirillum brasilense.